We begin with the raw amino-acid sequence, 235 residues long: Small ribosomal subunit protein uS3 (235 aa).

A KH type-2 domain is found at 39-107 (VRLFLRKELF…PTQINIAEIR (69 aa)).

The protein belongs to the universal ribosomal protein uS3 family. In terms of assembly, part of the 30S ribosomal subunit. Forms a tight complex with proteins S10 and S14.

Functionally, binds the lower part of the 30S subunit head. Binds mRNA in the 70S ribosome, positioning it for translation. This chain is Small ribosomal subunit protein uS3, found in Buchnera aphidicola subsp. Baizongia pistaciae (strain Bp).